The chain runs to 277 residues: MDKTLVSAIEDAFARYSTLTVEEIEDSIRPTVNRVIDGLETGAFRVAEPDNHGGWKVNEWLKKAVLLYFRVHDTTIVDAQPAPFWDKVESRFSGYDAVKFRAAGVRVVPGAIARRGSYFGKDVVLMPSFTNIGAYVGEGTMIDTWATVGSCAQLGAHCHLSGGAAIGGVLEPLQASPAIIEDHCFIGARSEVVEGVIVGHHSVIGMGVFISQSTRIYNRATGEISYGYVPPYSVVVSGQLPAKDGTHSLYCAVIVKQVDEKTRAKTSINELLRGLAD.

Residues arginine 106 and aspartate 143 each coordinate substrate.

It belongs to the transferase hexapeptide repeat family. In terms of assembly, homotrimer.

Its subcellular location is the cytoplasm. The catalysed reaction is (S)-2,3,4,5-tetrahydrodipicolinate + succinyl-CoA + H2O = (S)-2-succinylamino-6-oxoheptanedioate + CoA. The protein operates within amino-acid biosynthesis; L-lysine biosynthesis via DAP pathway; LL-2,6-diaminopimelate from (S)-tetrahydrodipicolinate (succinylase route): step 1/3. In Xylella fastidiosa (strain Temecula1 / ATCC 700964), this protein is 2,3,4,5-tetrahydropyridine-2,6-dicarboxylate N-succinyltransferase.